A 473-amino-acid polypeptide reads, in one-letter code: Adenosylhomocysteinase (473 aa).

Substrate contacts are provided by residues 58 to 62 (HMTIQ), Asp-135, and Glu-197. An NAD(+)-binding site is contributed by 198-200 (TTT). Lys-227 and Asp-231 together coordinate substrate. NAD(+)-binding positions include Asn-232, Val-265, Glu-284, Asn-319, 340–342 (IGH), and Asn-385. Residue His-342 coordinates substrate. His-392 is a binding site for substrate. NAD(+) is bound by residues Lys-467 and Tyr-471.

The protein belongs to the adenosylhomocysteinase family. In terms of assembly, homotetramer; dimer of dimers. The cofactor is NAD(+).

The protein localises to the cytoplasm. It catalyses the reaction S-adenosyl-L-homocysteine + H2O = L-homocysteine + adenosine. The protein operates within amino-acid biosynthesis; L-homocysteine biosynthesis; L-homocysteine from S-adenosyl-L-homocysteine: step 1/1. Functionally, may play a key role in the regulation of the intracellular concentration of adenosylhomocysteine, which is a strong inhibitor of SAM-dependent methyltransferases. Catalyzes the hydrolysis of S-adenosyl-L-homocysteine into L-homocysteine and adenosine. The chain is Adenosylhomocysteinase from Bradyrhizobium elkanii.